A 322-amino-acid polypeptide reads, in one-letter code: Solute carrier family 25 member 16 (322 aa).

Solcar repeat units follow at residues 34-120 (FYWL…YKTF), 128-219 (SGHV…LKSV), and 241-322 (LKTH…AVAF).

The protein belongs to the mitochondrial carrier (TC 2.A.29) family.

It localises to the mitochondrion inner membrane. Its function is as follows. May be involved in the transport of coenzyme A in the mitochondrial matrix. Very little is known about the physiological function of this carrier. The chain is Solute carrier family 25 member 16 from Rattus norvegicus (Rat).